Here is a 216-residue protein sequence, read N- to C-terminus: uncharacterized protein (216 aa).

6 helical membrane passes run Tyr-12–Ala-32, Gly-48–Leu-68, Leu-74–Leu-94, Ile-134–Leu-154, Phe-156–Phe-176, and Leu-191–Ala-211.

Belongs to the Rht family.

It is found in the cell membrane. This is an uncharacterized protein from Pseudomonas aeruginosa (strain ATCC 15692 / DSM 22644 / CIP 104116 / JCM 14847 / LMG 12228 / 1C / PRS 101 / PAO1).